The following is a 1083-amino-acid chain: Glutamate receptor-interacting protein 2 (1083 aa).

PDZ domains are found at residues 58–141 (IVEL…EYEL), 156–244 (TIEI…EYDV), and 258–342 (LVEI…LPAH). Residues 408 to 422 (AGTPGFSSQNSNTLP) are compositionally biased toward polar residues. Residues 408–460 (AGTPGFSSQNSNTLPRTVHPMSPRTTMNRRRQKRKDHKSSLSLASSTVGPGGQ) are disordered. Basic residues predominate over residues 434–444 (MNRRRQKRKDH). 3 PDZ domains span residues 468-555 (EIIL…EIEF), 569-652 (HVKL…RKDE), and 667-749 (TVEL…KKQT). Disordered regions lie at residues 754-783 (PQRLSDSMNEGSDPEDDLTDSQKTSKLSEI), 853-872 (NEQDWEKPTRYPSQPNGLET), and 936-965 (GSHHISSNSPKKENKLSQDARSKKEEVHNA). Polar residues predominate over residues 774 to 783 (SQKTSKLSEI). The segment covering 945-963 (PKKENKLSQDARSKKEEVH) has biased composition (basic and acidic residues). A PDZ 7 domain is found at 974-1056 (KVTVQKDMDT…RLDLVISRGL (83 aa)).

The protein belongs to the GRIP2 family. Enriched in the mitochondrial cloud of stage I oocytes, before becoming concentrated at the tip of the vegetal cortex in stage II oocytes. Expression becomes localized to the germ plasm of stage III-IV oocytes and early cleavage stages. At the tailbud stage, localizes to the migrating primordial germ cells (PGCs) until PGC migration is complete (stage 40), at which point expression disappears. In the adult, expressed in the brain, ovary, eye, muscle, spinal cord and very weakly in adipocytes.

The protein localises to the cytoplasm. Functionally, plays an important role in primordial germ cell (PGC) maintenance and efficiency of PGC migration. The chain is Glutamate receptor-interacting protein 2 from Xenopus laevis (African clawed frog).